The primary structure comprises 431 residues: Large envelope protein (431 aa).

G2 carries the N-myristoyl glycine; by host lipid modification. The interval 2–148 is pre-S1; it reads GNNIKVTFNP…PPLRDTHPHL (147 aa). A pre-S region spans residues 2–207; that stretch reads GNNIKVTFNP…PSTTGDPALS (206 aa). At 2–214 the chain is on the virion surface; in external conformation side; that stretch reads GNNIKVTFNP…ALSPEMSPSS (213 aa). Topologically, residues 2 to 286 are intravirion; in internal conformation; that stretch reads GNNIKVTFNP…NGFRWMYLRR (285 aa). A glycan (N-linked (GlcNAc...) asparagine) is linked at N3. Residues 115 to 147 form a disordered region; that stretch reads IPRGLVPPQTPTNRDQGRKPTPPTPPLRDTHPH. Residues 149-207 form a pre-S2 region; the sequence is TMKNQTFHLQGFVDGLRDLTTTERQHNAYGDPFTTLSPAVPTVSTILSPPSTTGDPALS. Residues 215–235 form a helical membrane-spanning segment; it reads LLGLLAGLQVVYFLWTKILTI. The Intravirion; in external conformation segment spans residues 236 to 286; it reads AQNLDWWWTSLSFPGGIPECTGQNSQFQTCKHLPTSCPPTCNGFRWMYLRR. A helical membrane pass occupies residues 287–307; that stretch reads FIIYLLVLLLCLIFLLVLLDW. Residues 308 to 379 are Virion surface-facing; the sequence is KGFIPVCPLQ…WALARFSWLN (72 aa). N351 carries N-linked (GlcNAc...) asparagine; by host glycosylation. Residues 380 to 400 form a helical membrane-spanning segment; sequence LLVPLLQWLGGISLIAWFLLI. The Intravirion portion of the chain corresponds to 401–406; that stretch reads WMIWFW. The chain crosses the membrane as a helical span at residues 407–429; sequence GPALLSILPPFIPIFVLFFLIWV. The Virion surface segment spans residues 430–431; sequence YI.

Belongs to the orthohepadnavirus major surface antigen family. In terms of assembly, in its internal form (Li-HBsAg), interacts with the capsid protein and with the isoform S. Interacts with host chaperone CANX. Associates with host chaperone CANX through its pre-S2 N glycan; this association may be essential for isoform M proper secretion. As to quaternary structure, interacts with isoform L. Interacts with the antigens of satellite virus HDV (HDVAgs); this interaction is required for encapsidation of HDV genomic RNA. Post-translationally, isoform M is N-terminally acetylated by host at a ratio of 90%, and N-glycosylated by host at the pre-S2 region. Myristoylated.

The protein localises to the virion membrane. In terms of biological role, the large envelope protein exists in two topological conformations, one which is termed 'external' or Le-HBsAg and the other 'internal' or Li-HBsAg. In its external conformation the protein attaches the virus to cell receptors and thereby initiating infection. This interaction determines the species specificity and liver tropism. This attachment induces virion internalization predominantly through caveolin-mediated endocytosis. The large envelope protein also assures fusion between virion membrane and endosomal membrane. In its internal conformation the protein plays a role in virion morphogenesis and mediates the contact with the nucleocapsid like a matrix protein. Functionally, the middle envelope protein plays an important role in the budding of the virion. It is involved in the induction of budding in a nucleocapsid independent way. In this process the majority of envelope proteins bud to form subviral lipoprotein particles of 22 nm of diameter that do not contain a nucleocapsid. This is Large envelope protein from Marmota monax (Woodchuck).